Reading from the N-terminus, the 396-residue chain is Tyrosine--tRNA ligase (396 aa).

An L-tyrosine-binding site is contributed by Y36. Residues 41-50 carry the 'HIGH' region motif; the sequence is PTANSLHIGN. L-tyrosine contacts are provided by Y165 and Q169. Residues 225–229 carry the 'KMSKS' region motif; that stretch reads KMGKT. Position 228 (K228) interacts with ATP. An S4 RNA-binding domain is found at 331–394; the sequence is TNLIDYLVET…KKSFLTIKTV (64 aa).

The protein belongs to the class-I aminoacyl-tRNA synthetase family. TyrS type 1 subfamily. In terms of assembly, homodimer.

The protein localises to the cytoplasm. The catalysed reaction is tRNA(Tyr) + L-tyrosine + ATP = L-tyrosyl-tRNA(Tyr) + AMP + diphosphate + H(+). Catalyzes the attachment of tyrosine to tRNA(Tyr) in a two-step reaction: tyrosine is first activated by ATP to form Tyr-AMP and then transferred to the acceptor end of tRNA(Tyr). This chain is Tyrosine--tRNA ligase, found in Mycoplasma genitalium (strain ATCC 33530 / DSM 19775 / NCTC 10195 / G37) (Mycoplasmoides genitalium).